The primary structure comprises 362 residues: sn-glycerol-3-phosphate import ATP-binding protein UgpC (362 aa).

An ABC transporter domain is found at 4 to 235 (LSFRNVKKTY…PASTFVAGFI (232 aa)). An ATP-binding site is contributed by 37 to 44 (GPSGCGKS).

The protein belongs to the ABC transporter superfamily. sn-glycerol-3-phosphate importer (TC 3.A.1.1.3) family. The complex is composed of two ATP-binding proteins (UgpC), two transmembrane proteins (UgpA and UgpE) and a solute-binding protein (UgpB).

The protein resides in the cell inner membrane. The enzyme catalyses sn-glycerol 3-phosphate(out) + ATP + H2O = sn-glycerol 3-phosphate(in) + ADP + phosphate + H(+). Its function is as follows. Part of the ABC transporter complex UgpBAEC involved in sn-glycerol-3-phosphate (G3P) import. Responsible for energy coupling to the transport system. This Bordetella pertussis (strain Tohama I / ATCC BAA-589 / NCTC 13251) protein is sn-glycerol-3-phosphate import ATP-binding protein UgpC.